Reading from the N-terminus, the 271-residue chain is Ribosomal RNA small subunit methyltransferase A (271 aa).

S-adenosyl-L-methionine contacts are provided by asparagine 19, leucine 21, glycine 46, glutamate 67, aspartate 92, and asparagine 113.

Belongs to the class I-like SAM-binding methyltransferase superfamily. rRNA adenine N(6)-methyltransferase family. RsmA subfamily.

It is found in the cytoplasm. It catalyses the reaction adenosine(1518)/adenosine(1519) in 16S rRNA + 4 S-adenosyl-L-methionine = N(6)-dimethyladenosine(1518)/N(6)-dimethyladenosine(1519) in 16S rRNA + 4 S-adenosyl-L-homocysteine + 4 H(+). In terms of biological role, specifically dimethylates two adjacent adenosines (A1518 and A1519) in the loop of a conserved hairpin near the 3'-end of 16S rRNA in the 30S particle. May play a critical role in biogenesis of 30S subunits. This chain is Ribosomal RNA small subunit methyltransferase A, found in Photobacterium profundum (strain SS9).